Here is a 182-residue protein sequence, read N- to C-terminus: Dual-action ribosomal maturation protein DarP (182 aa).

The protein belongs to the DarP family.

It localises to the cytoplasm. Functionally, member of a network of 50S ribosomal subunit biogenesis factors which assembles along the 30S-50S interface, preventing incorrect 23S rRNA structures from forming. Promotes peptidyl transferase center (PTC) maturation. In Yersinia pestis, this protein is Dual-action ribosomal maturation protein DarP.